A 470-amino-acid polypeptide reads, in one-letter code: Xaa-Pro aminopeptidase 2 (470 aa).

Mn(2+)-binding residues include D287, D299, H382, E413, and E437.

Belongs to the peptidase M24B family. Homodimer. Requires Mn(2+) as cofactor.

The catalysed reaction is Release of any N-terminal amino acid, including proline, that is linked to proline, even from a dipeptide or tripeptide.. This chain is Xaa-Pro aminopeptidase 2 (pepP2), found in Streptomyces coelicolor (strain ATCC BAA-471 / A3(2) / M145).